Here is a 111-residue protein sequence, read N- to C-terminus: Cell cycle protein GpsB (111 aa).

Residues 38 to 72 (IKDYEAFHKEFEQLKQQNARLKRELEEQKLAATQV) are a coiled coil.

Belongs to the GpsB family. Forms polymers through the coiled coil domains. Interacts with PBP1, MreC and EzrA.

It localises to the cytoplasm. Its function is as follows. Divisome component that associates with the complex late in its assembly, after the Z-ring is formed, and is dependent on DivIC and PBP2B for its recruitment to the divisome. Together with EzrA, is a key component of the system that regulates PBP1 localization during cell cycle progression. Its main role could be the removal of PBP1 from the cell pole after pole maturation is completed. Also contributes to the recruitment of PBP1 to the division complex. Not essential for septum formation. This is Cell cycle protein GpsB from Bacillus cereus (strain ATCC 10987 / NRS 248).